Here is a 245-residue protein sequence, read N- to C-terminus: 1-(5-phosphoribosyl)-5-[(5-phosphoribosylamino)methylideneamino] imidazole-4-carboxamide isomerase (245 aa).

The Proton acceptor role is filled by Asp7. The active-site Proton donor is Asp129.

Belongs to the HisA/HisF family.

The protein localises to the cytoplasm. It carries out the reaction 1-(5-phospho-beta-D-ribosyl)-5-[(5-phospho-beta-D-ribosylamino)methylideneamino]imidazole-4-carboxamide = 5-[(5-phospho-1-deoxy-D-ribulos-1-ylimino)methylamino]-1-(5-phospho-beta-D-ribosyl)imidazole-4-carboxamide. It participates in amino-acid biosynthesis; L-histidine biosynthesis; L-histidine from 5-phospho-alpha-D-ribose 1-diphosphate: step 4/9. The protein is 1-(5-phosphoribosyl)-5-[(5-phosphoribosylamino)methylideneamino] imidazole-4-carboxamide isomerase of Escherichia coli O9:H4 (strain HS).